The chain runs to 487 residues: N-succinylglutamate 5-semialdehyde dehydrogenase (487 aa).

Position 221–226 (Gly221–Gly226) interacts with NAD(+). Active-site residues include Glu244 and Cys278.

This sequence belongs to the aldehyde dehydrogenase family. AstD subfamily.

The enzyme catalyses N-succinyl-L-glutamate 5-semialdehyde + NAD(+) + H2O = N-succinyl-L-glutamate + NADH + 2 H(+). It functions in the pathway amino-acid degradation; L-arginine degradation via AST pathway; L-glutamate and succinate from L-arginine: step 4/5. In terms of biological role, catalyzes the NAD-dependent reduction of succinylglutamate semialdehyde into succinylglutamate. This Burkholderia ambifaria (strain ATCC BAA-244 / DSM 16087 / CCUG 44356 / LMG 19182 / AMMD) (Burkholderia cepacia (strain AMMD)) protein is N-succinylglutamate 5-semialdehyde dehydrogenase.